The following is a 702-amino-acid chain: Vacuolar protein sorting-associated protein 52 homolog (702 aa).

The stretch at 505 to 535 forms a coiled coil; sequence KEMGAKMEAVLENSEDSIEQLLTRMSAMQQT.

Belongs to the VPS52 family. Component of the Golgi-associated retrograde protein (GARP) complex, also called VFT (VPS fifty-three) complex, composed of vps-51, vps-52, vps-53 and vps-54. Within the complex interacts with vps-53 and vps-54. Interacts with the small GTPases rab-6.1 and rab-6.2. As to expression, ubiquitously expressed, with particularly strong expression in neuronal cells. Specifically expressed in head and tail neurons and in the pharynx and ventral cord motor neurons.

It is found in the golgi apparatus. The protein resides in the trans-Golgi network. It localises to the perikaryon. The protein localises to the cytoplasm. Its subcellular location is the perinuclear region. Its function is as follows. Acts as a component of the GARP complex that is involved in retrograde transport from early and late endosomes to the trans-Golgi network (TGN). The GARP complex facilitates tethering as well as SNARE complex assembly at the Golgi. Plays a role in the trafficking of cargo to dense-core vesicles, probably through association with the EARP-interacting protein eipr-1. Important for neuronal function. The protein is Vacuolar protein sorting-associated protein 52 homolog of Caenorhabditis elegans.